Here is a 146-residue protein sequence, read N- to C-terminus: Monothiol glutaredoxin-5, mitochondrial (146 aa).

The Glutaredoxin domain maps to 26–131; sequence RQALEQAVKE…KILKEINALA (106 aa). Lys-43 serves as a coordination point for glutathione. Cys-51 is a [2Fe-2S] cluster binding site. Glutathione contacts are provided by residues 83–87, Ile-95, and 108–109; these read REGIK and SD.

This sequence belongs to the glutaredoxin family. Monothiol subfamily. As to quaternary structure, homodimer. Interacts with ISA1 and ISA2.

It is found in the mitochondrion. Monothiol glutaredoxin involved in mitochondrial iron-sulfur (Fe/S) cluster transfer. Receives 2Fe/2S clusters from scaffold protein isu1 and mediates their transfer to apoproteins, to the 4Fe/FS cluster biosynthesis machinery, or export from mitochondrion. This is Monothiol glutaredoxin-5, mitochondrial from Schizosaccharomyces pombe (strain 972 / ATCC 24843) (Fission yeast).